Here is a 597-residue protein sequence, read N- to C-terminus: DDB1- and CUL4-associated factor 8 (597 aa).

Residues 1–24 are compositionally biased toward polar residues; sequence MSSKGSSTDGRTDLANGSLSSSPE. Residues 1-147 are disordered; sequence MSSKGSSTDG…DWVSSETSAL (147 aa). Ser21 and Ser22 each carry phosphoserine. A Nuclear export signal motif is present at residues 39–50; it reads IEVEASDLSLSL. Residues 65–99 show a composition bias toward basic and acidic residues; it reads RGTDTESSGEDKDSDSMEDTGHYSINDENRVHDRS. Ser99 carries the phosphoserine modification. Over residues 100–112 the composition is skewed to acidic residues; that stretch reads EEEEEEEEEEEEE. Residues 114–122 carry the Nuclear localization signal motif; it reads PRRRVQRKR. The span at 124–137 shows a compositional bias: basic and acidic residues; that stretch reads NRDQDSSDDERALE. 2 positions are modified to phosphoserine: Ser129 and Ser130. 7 WD repeats span residues 191-230, 234-275, 281-321, 329-369, 385-424, 432-472, and 476-515; these read GHTG…PVLD, GHKS…CCKN, QHKG…PASK, EKKV…ENEN, ESKA…GAQY, RNNA…IIQF, and DKGG…STEL. The residue at position 204 (Arg204) is an Omega-N-methylarginine; by PRMT1. The interval 558 to 597 is disordered; the sequence is HRRWREPGVGATDADSDESPSSSDTSDEEEGPDRVQCMPS.

Belongs to the WD repeat DCAF8 family. Interacts with DDB1, CUL4A and CUL4B. Interacts with KPNA1, KPNB1 and XPO1.

The protein resides in the nucleus. It localises to the cytoplasm. Its pathway is protein modification; protein ubiquitination. May function as a substrate receptor for CUL4-DDB1 E3 ubiquitin-protein ligase complex. This chain is DDB1- and CUL4-associated factor 8 (DCAF8), found in Homo sapiens (Human).